A 255-amino-acid chain; its full sequence is uncharacterized protein (255 aa).

This is an uncharacterized protein from Bacillus subtilis (strain 168).